Here is a 436-residue protein sequence, read N- to C-terminus: tRNA-2-methylthio-N(6)-dimethylallyladenosine synthase (436 aa).

Positions 5–120 constitute an MTTase N-terminal domain; that stretch reads KKLFIQTLGC…IKDVVDVKGA (116 aa). The [4Fe-4S] cluster site is built by C14, C51, C83, C152, C156, and C159. The region spanning 138–372 is the Radical SAM core domain; that stretch reads KTNKYRASVN…IELHKRYLEE (235 aa). The region spanning 375-436 is the TRAM domain; it reads PKLIGETLNI…RTSLKGEVVN (62 aa).

Belongs to the methylthiotransferase family. MiaB subfamily. In terms of assembly, monomer. It depends on [4Fe-4S] cluster as a cofactor.

It is found in the cytoplasm. The enzyme catalyses N(6)-dimethylallyladenosine(37) in tRNA + (sulfur carrier)-SH + AH2 + 2 S-adenosyl-L-methionine = 2-methylsulfanyl-N(6)-dimethylallyladenosine(37) in tRNA + (sulfur carrier)-H + 5'-deoxyadenosine + L-methionine + A + S-adenosyl-L-homocysteine + 2 H(+). In terms of biological role, catalyzes the methylthiolation of N6-(dimethylallyl)adenosine (i(6)A), leading to the formation of 2-methylthio-N6-(dimethylallyl)adenosine (ms(2)i(6)A) at position 37 in tRNAs that read codons beginning with uridine. The polypeptide is tRNA-2-methylthio-N(6)-dimethylallyladenosine synthase (Aliarcobacter butzleri (strain RM4018) (Arcobacter butzleri)).